Here is a 552-residue protein sequence, read N- to C-terminus: Alpha-galactosidase (552 aa).

Substrate is bound by residues Trp65, Tyr191, 220 to 221, 325 to 327, Cys368, and Arg383; these read DD and KID. The active-site Nucleophile is the Asp327. Asp387 serves as the catalytic Proton donor/acceptor.

Belongs to the glycosyl hydrolase 36 family. In terms of assembly, homodimer.

The catalysed reaction is Hydrolysis of terminal, non-reducing alpha-D-galactose residues in alpha-D-galactosides, including galactose oligosaccharides, galactomannans and galactolipids.. Inhibited by hydrolysis product alpha-galactopyranose and to a lesser extent by beta-galactopyranose, its mutarotational product. Inhibited by synthetic cyclopropyl carbasugars. Functionally, hydrolyzes the short-chain alpha-galactosaccharides raffinose, melibiose and stachyose. This chain is Alpha-galactosidase, found in Thermotoga maritima (strain ATCC 43589 / DSM 3109 / JCM 10099 / NBRC 100826 / MSB8).